The chain runs to 847 residues: Putative disease resistance RPP13-like protein 3 (847 aa).

Positions 24-41 (LMGVKDDLEELKTELTCI) form a coiled coil. The 311-residue stretch at 143 to 453 (TNVRVRQLRR…AEGFIQEDEE (311 aa)) folds into the NB-ARC domain. An ATP-binding site is contributed by 192 to 199 (GMGGLGKT).

It belongs to the disease resistance NB-LRR family. RPP13 subfamily.

In terms of biological role, potential disease resistance protein. The sequence is that of Putative disease resistance RPP13-like protein 3 (RPP13L3) from Arabidopsis thaliana (Mouse-ear cress).